The chain runs to 312 residues: MSDTRPLALLLMGPTAAGKTDLAIALRERLGGELISVDSAMIYRGMDIGTAKPSAQELARAPHRLIDIRDPAETYSAAEFRDDALAEMRDISSQGRTPILVGGTMMYIKRLIDGVASLPARDPALREALNARAESEGLVALHRELSRVDPVAAETIHPHNRQRLLRALEVYQLTGRALGELWAEQARETFPWRLVSIALAPNARHVLHARIAERFDSMLAAGFRDEVAALQARGDLHRGLPAIRCVGYRQMWEHLRGETDAATMRERGLAATRQLAKRQLTWLRGWEGVHWIDSDASDAHEQVLKIVRGSST.

Position 13–20 (13–20 (GPTAAGKT)) interacts with ATP. Position 15 to 20 (15 to 20 (TAAGKT)) interacts with substrate. 3 interaction with substrate tRNA regions span residues 38 to 41 (DSAM), 162 to 166 (QRLLR), and 244 to 249 (RCVGYR).

This sequence belongs to the IPP transferase family. Monomer. It depends on Mg(2+) as a cofactor.

It carries out the reaction adenosine(37) in tRNA + dimethylallyl diphosphate = N(6)-dimethylallyladenosine(37) in tRNA + diphosphate. Functionally, catalyzes the transfer of a dimethylallyl group onto the adenine at position 37 in tRNAs that read codons beginning with uridine, leading to the formation of N6-(dimethylallyl)adenosine (i(6)A). The protein is tRNA dimethylallyltransferase of Chromohalobacter salexigens (strain ATCC BAA-138 / DSM 3043 / CIP 106854 / NCIMB 13768 / 1H11).